Consider the following 106-residue polypeptide: UPF0145 protein Daci_3728 (106 aa).

It belongs to the UPF0145 family.

This is UPF0145 protein Daci_3728 from Delftia acidovorans (strain DSM 14801 / SPH-1).